The sequence spans 612 residues: ETS-related transcription factor Elf-1 (612 aa).

Phosphoserine is present on residues serine 110, serine 163, serine 167, and serine 168. A compositionally biased stretch (polar residues) spans 156–169; it reads VQETNADSPGASSP. The tract at residues 156 to 199 is disordered; it reads VQETNADSPGASSPEQRKRKKGRKTKPPRPDSPTTTPNISVKKK. Residues 172-182 show a composition bias toward basic residues; the sequence is RKRKKGRKTKP. Residue serine 187 is modified to Phosphoserine. Threonine 190 bears the Phosphothreonine mark. The segment at residues 208–290 is a DNA-binding region (ETS); that stretch reads IYLWEFLLAL…EGQRLVYQFK (83 aa). Positions 300 to 361 are disordered; it reads DDEDPSSSIE…AANPKDPVEV (62 aa). The span at 305–322 shows a compositional bias: low complexity; sequence SSSIESSDQSLSSTTASS. Over residues 323 to 335 the composition is skewed to polar residues; the sequence is RNQANRSRVSSSP. Serine 431 is subject to Phosphoserine. The span at 562–577 shows a compositional bias: basic and acidic residues; sequence EVEKKAEDDLNEDAEK. Positions 562–586 are disordered; it reads EVEKKAEDDLNEDAEKSAQQPQPYV.

The protein belongs to the ETS family. In terms of assembly, binds to the underphosphorylated form of RB. May interact with other transcription factors in order to regulate specific genes. Interacts with RUNX1. Interacts with SP1; the interaction is inhibited by glycosylation of SP1. As to expression, predominantly found in hematopoietic cells. Detected in other cell types such as fibroblasts.

Its subcellular location is the nucleus. Its function is as follows. Transcription factor that activates the LYN and BLK promoters. The sequence is that of ETS-related transcription factor Elf-1 (Elf1) from Mus musculus (Mouse).